Consider the following 72-residue polypeptide: Translation initiation factor IF-1 (72 aa).

An S1-like domain is found at 1-72 (MIKEDNIEMH…SKGRIIFRSR (72 aa)).

It belongs to the IF-1 family. In terms of assembly, component of the 30S ribosomal translation pre-initiation complex which assembles on the 30S ribosome in the order IF-2 and IF-3, IF-1 and N-formylmethionyl-tRNA(fMet); mRNA recruitment can occur at any time during PIC assembly.

It is found in the cytoplasm. Functionally, one of the essential components for the initiation of protein synthesis. Stabilizes the binding of IF-2 and IF-3 on the 30S subunit to which N-formylmethionyl-tRNA(fMet) subsequently binds. Helps modulate mRNA selection, yielding the 30S pre-initiation complex (PIC). Upon addition of the 50S ribosomal subunit IF-1, IF-2 and IF-3 are released leaving the mature 70S translation initiation complex. The chain is Translation initiation factor IF-1 from Blochmanniella floridana.